The sequence spans 197 residues: Peptide deformylase (197 aa).

Fe cation is bound by residues C106 and H148. E149 is an active-site residue. A Fe cation-binding site is contributed by H152.

It belongs to the polypeptide deformylase family. Fe(2+) is required as a cofactor.

The enzyme catalyses N-terminal N-formyl-L-methionyl-[peptide] + H2O = N-terminal L-methionyl-[peptide] + formate. Functionally, removes the formyl group from the N-terminal Met of newly synthesized proteins. Requires at least a dipeptide for an efficient rate of reaction. N-terminal L-methionine is a prerequisite for activity but the enzyme has broad specificity at other positions. This Mycobacteroides abscessus (strain ATCC 19977 / DSM 44196 / CCUG 20993 / CIP 104536 / JCM 13569 / NCTC 13031 / TMC 1543 / L948) (Mycobacterium abscessus) protein is Peptide deformylase.